Consider the following 157-residue polypeptide: Putative 4-hydroxy-4-methyl-2-oxoglutarate aldolase (157 aa).

Residues 78 to 81 (GDVI) and Arg100 contribute to the substrate site. Asp101 is an a divalent metal cation binding site.

The protein belongs to the class II aldolase/RraA-like family. In terms of assembly, homotrimer. A divalent metal cation serves as cofactor.

The enzyme catalyses 4-hydroxy-4-methyl-2-oxoglutarate = 2 pyruvate. The catalysed reaction is oxaloacetate + H(+) = pyruvate + CO2. Catalyzes the aldol cleavage of 4-hydroxy-4-methyl-2-oxoglutarate (HMG) into 2 molecules of pyruvate. Also contains a secondary oxaloacetate (OAA) decarboxylase activity due to the common pyruvate enolate transition state formed following C-C bond cleavage in the retro-aldol and decarboxylation reactions. The polypeptide is Putative 4-hydroxy-4-methyl-2-oxoglutarate aldolase (Mycobacterium leprae (strain Br4923)).